A 297-amino-acid polypeptide reads, in one-letter code: MTKQTEYKRKPEWLKIKLNTNENYTGLKKMMRSKNLHTVCEEAKCPNIHECWAVRKTATFMILGAVCTRACRFCAVKTGLPTELDLQEPERVADSVVQMGLKHVVITAVARDDLKDGGAAVFAETVRAVRRKNPFTSIEVLPSDMGGVEENLKMLMDAKPDILNHNIETVRRLSDRVRARAKYERSLEFLRRAKEMQPDIPTKSSIMVGLGETREDLIEAMDDLRANNVDILTLGQYLQPSKKHLPVLKYYPPAEFAELKEIALSKGFSHCEAGPLVRSSYHADEQVRSAKEKTAGS.

Positions 40, 45, 51, 67, 71, 74, and 280 each coordinate [4Fe-4S] cluster. Residues 53-269 (AVRKTATFMI…KEIALSKGFS (217 aa)) enclose the Radical SAM core domain.

Belongs to the radical SAM superfamily. Lipoyl synthase family. The cofactor is [4Fe-4S] cluster.

The protein resides in the cytoplasm. It carries out the reaction [[Fe-S] cluster scaffold protein carrying a second [4Fe-4S](2+) cluster] + N(6)-octanoyl-L-lysyl-[protein] + 2 oxidized [2Fe-2S]-[ferredoxin] + 2 S-adenosyl-L-methionine + 4 H(+) = [[Fe-S] cluster scaffold protein] + N(6)-[(R)-dihydrolipoyl]-L-lysyl-[protein] + 4 Fe(3+) + 2 hydrogen sulfide + 2 5'-deoxyadenosine + 2 L-methionine + 2 reduced [2Fe-2S]-[ferredoxin]. It participates in protein modification; protein lipoylation via endogenous pathway; protein N(6)-(lipoyl)lysine from octanoyl-[acyl-carrier-protein]. Catalyzes the radical-mediated insertion of two sulfur atoms into the C-6 and C-8 positions of the octanoyl moiety bound to the lipoyl domains of lipoate-dependent enzymes, thereby converting the octanoylated domains into lipoylated derivatives. This Bacillus cereus (strain ATCC 14579 / DSM 31 / CCUG 7414 / JCM 2152 / NBRC 15305 / NCIMB 9373 / NCTC 2599 / NRRL B-3711) protein is Lipoyl synthase.